Here is a 90-residue protein sequence, read N- to C-terminus: uncharacterized protein (90 aa).

The first 21 residues, 1 to 21, serve as a signal peptide directing secretion; the sequence is MFKFSIPLLLFIFLFFSCINS. The disordered stretch occupies residues 56 to 90; that stretch reads SNEKLPERILSGSSGSCSSCSISSSNGSSSRSSKQ. The segment covering 66 to 90 has biased composition (low complexity); it reads SGSSGSCSSCSISSSNGSSSRSSKQ. Asparagine 81 is a glycosylation site (N-linked (GlcNAc...) asparagine).

This is an uncharacterized protein from Dictyostelium discoideum (Social amoeba).